The following is a 208-amino-acid chain: uncharacterized protein (208 aa).

Disordered regions lie at residues 1–78 and 154–208; these read MDLF…SPTE and RRRS…PRNY. Residues 40–51 are compositionally biased toward basic residues; the sequence is KNHKKAQPRRTT. Polar residues predominate over residues 179–197; sequence ANSSSPNPTATGSETSYGS.

This is an uncharacterized protein from Caenorhabditis elegans.